A 701-amino-acid polypeptide reads, in one-letter code: Polyribonucleotide nucleotidyltransferase (701 aa).

D487 and D493 together coordinate Mg(2+). The KH domain maps to P554 to I613. One can recognise an S1 motif domain in the interval G623–K691.

This sequence belongs to the polyribonucleotide nucleotidyltransferase family. As to quaternary structure, component of the RNA degradosome, which is a multiprotein complex involved in RNA processing and mRNA degradation. Mg(2+) is required as a cofactor.

The protein resides in the cytoplasm. The enzyme catalyses RNA(n+1) + phosphate = RNA(n) + a ribonucleoside 5'-diphosphate. Its function is as follows. Involved in mRNA degradation. Catalyzes the phosphorolysis of single-stranded polyribonucleotides processively in the 3'- to 5'-direction. This chain is Polyribonucleotide nucleotidyltransferase, found in Pseudomonas putida (strain ATCC 47054 / DSM 6125 / CFBP 8728 / NCIMB 11950 / KT2440).